Here is a 196-residue protein sequence, read N- to C-terminus: Rho-related protein racA (196 aa).

Residues alanine 13, glycine 15, lysine 16, threonine 17, cysteine 18, tyrosine 32, threonine 35, glycine 60, lysine 116, aspartate 118, and alanine 159 each contribute to the GTP site. Threonine 17 contacts Mg(2+). 2 short sequence motifs (switch) span residues 26-37 (NAFPNEYIPTVF) and 57-75 (DTAG…YPQT). Residue threonine 35 coordinates Mg(2+). Cysteine 193 bears the Cysteine methyl ester mark. A lipid anchor (S-geranylgeranyl cysteine) is attached at cysteine 193. The propeptide at 194–196 (LLF) is removed in mature form.

This sequence belongs to the small GTPase superfamily. Rho family. Interacts (GTP-bound form) with PAK2 (via CRIB domain). It depends on Mg(2+) as a cofactor.

The protein resides in the cell membrane. The protein localises to the cytoplasm. Its subcellular location is the cytoskeleton. It carries out the reaction GTP + H2O = GDP + phosphate + H(+). Regulated by guanine nucleotide exchange factors (GEFs) which promote the exchange of bound GDP for free GTP, GTPase activating proteins (GAPs) which increase the GTP hydrolysis activity, and GDP dissociation inhibitors which inhibit the dissociation of the nucleotide from the GTPase. Functionally, small GTPase which cycles between active GTP-bound and inactive GDP-bound states. Involved in cytoskeleton remodeling. Plays a role in phagocytosis of bacteria and host erythrocytes. Involved in capping of surface receptors. May be involved in cytokinesis. The chain is Rho-related protein racA from Entamoeba histolytica (strain ATCC 30459 / HM-1:IMSS / ABRM).